Consider the following 690-residue polypeptide: Elongation factor G (690 aa).

Residues 8–282 (DKVRNIGIMA…AIVNYLPSPL (275 aa)) enclose the tr-type G domain. GTP is bound by residues 17–24 (AHIDAGKT), 81–85 (DTPGH), and 135–138 (NKMD).

It belongs to the TRAFAC class translation factor GTPase superfamily. Classic translation factor GTPase family. EF-G/EF-2 subfamily.

The protein localises to the cytoplasm. In terms of biological role, catalyzes the GTP-dependent ribosomal translocation step during translation elongation. During this step, the ribosome changes from the pre-translocational (PRE) to the post-translocational (POST) state as the newly formed A-site-bound peptidyl-tRNA and P-site-bound deacylated tRNA move to the P and E sites, respectively. Catalyzes the coordinated movement of the two tRNA molecules, the mRNA and conformational changes in the ribosome. The polypeptide is Elongation factor G (Caldanaerobacter subterraneus subsp. tengcongensis (strain DSM 15242 / JCM 11007 / NBRC 100824 / MB4) (Thermoanaerobacter tengcongensis)).